The chain runs to 444 residues: tRNA modification GTPase MnmE (444 aa).

(6S)-5-formyl-5,6,7,8-tetrahydrofolate is bound by residues Arg23, Glu82, and Lys121. A TrmE-type G domain is found at 216 to 365 (GTSIVLAGLP…LKQALQKWLN (150 aa)). K(+) is bound at residue Asn226. Residues 226-231 (NAGKSS), 245-251 (TDIPGTT), and 270-273 (DSAG) contribute to the GTP site. Residue Ser230 coordinates Mg(2+). 3 residues coordinate K(+): Thr245, Ile247, and Thr250. Thr251 provides a ligand contact to Mg(2+). Lys444 lines the (6S)-5-formyl-5,6,7,8-tetrahydrofolate pocket.

The protein belongs to the TRAFAC class TrmE-Era-EngA-EngB-Septin-like GTPase superfamily. TrmE GTPase family. Homodimer. Heterotetramer of two MnmE and two MnmG subunits. K(+) is required as a cofactor.

It localises to the cytoplasm. Exhibits a very high intrinsic GTPase hydrolysis rate. Involved in the addition of a carboxymethylaminomethyl (cmnm) group at the wobble position (U34) of certain tRNAs, forming tRNA-cmnm(5)s(2)U34. The protein is tRNA modification GTPase MnmE of Chlamydia trachomatis serovar A (strain ATCC VR-571B / DSM 19440 / HAR-13).